Here is a 329-residue protein sequence, read N- to C-terminus: MELHILEHRVRVLSVARPGLWLYTHPLIKLLFLPRRSRCKFFSLTETPEDYTLMVDEEGFKELPPSEFLQVAEATWLVLNVSSHSGAAVQAAGVTKIARSVIAPLAEHHVSVLMLSTYQTDFILVREQDLSVVIHTLAQEFDIYREVGGEPVPVTRDDSSNGFPRTQHGPSPTVHPIQSPQNRFCVLTLDPETLPAIATTLIDVLFYSHSTPKEAASSSPEPSSITFFAFSLIEGYISIVMDAETQKKFPSDLLLTSSSGELWRMVRIGGQPLGFDECGIVAQIAGPLAAADISAYYISTFNFDHALVPEDGIGSVIEVLQRRQEGLAS.

S14 is subject to Phosphoserine; by PKB/AKT1. ACT domains follow at residues 72-138 and 260-321; these read AEAT…HTLA and GELW…EVLQ. L-arginine contacts are provided by residues 111-112, G274, 280-281, and 300-304; these read SV, IV, and TFNFD.

This sequence belongs to the GATS family. As to quaternary structure, forms homodimers and heterodimers with CASTOR2. Interacts with the GATOR2 complex which is composed of MIOS, SEC13, SEH1L, WDR24 and WDR59; the interaction is negatively regulated by arginine. Interacts with TM4SF5; the interaction is positively regulated by leucine and is negatively regulated by arginine. Post-translationally, phosphorylation at Ser-14 by AKT1, promoting the interaction between CASTOR1 and RNF167. In terms of processing, ubiquitinated by RNF167 via 'Lys-29'-polyubiquitination, leading to its degradation, releasing the GATOR2 complex. Ubiquitination by RNF167 is promoted by phosphorylation at Ser-14 by AKT1. Widely expressed.

It localises to the cytoplasm. The protein resides in the cytosol. Its function is as follows. Functions as an intracellular arginine sensor within the amino acid-sensing branch of the TORC1 signaling pathway. As a homodimer or a heterodimer with CASTOR2, binds and inhibits the GATOR subcomplex GATOR2 and thereby mTORC1. Binding of arginine to CASTOR1 allosterically disrupts the interaction of CASTOR1-containing dimers with GATOR2 which can in turn activate mTORC1 and the TORC1 signaling pathway. This is Cytosolic arginine sensor for mTORC1 subunit 1 from Homo sapiens (Human).